The sequence spans 374 residues: Chaperone protein DnaJ (374 aa).

The J domain occupies 5–70 (DYYEVLGVER…NKRAAYDQYG (66 aa)). The CR-type zinc-finger motif lies at 133–211 (GTSVNIRVPT…CHGEGRVEEY (79 aa)). Positions 146, 149, 163, 166, 185, 188, 199, and 202 each coordinate Zn(2+). 4 CXXCXGXG motif repeats span residues 146-153 (CKPCDGSG), 163-170 (CPTCGGIG), 185-192 (CPRCHGQG), and 199-206 (CDSCHGEG).

It belongs to the DnaJ family. Homodimer. Zn(2+) is required as a cofactor.

It is found in the cytoplasm. Participates actively in the response to hyperosmotic and heat shock by preventing the aggregation of stress-denatured proteins and by disaggregating proteins, also in an autonomous, DnaK-independent fashion. Unfolded proteins bind initially to DnaJ; upon interaction with the DnaJ-bound protein, DnaK hydrolyzes its bound ATP, resulting in the formation of a stable complex. GrpE releases ADP from DnaK; ATP binding to DnaK triggers the release of the substrate protein, thus completing the reaction cycle. Several rounds of ATP-dependent interactions between DnaJ, DnaK and GrpE are required for fully efficient folding. Also involved, together with DnaK and GrpE, in the DNA replication of plasmids through activation of initiation proteins. This chain is Chaperone protein DnaJ, found in Pseudomonas fluorescens (strain SBW25).